An 815-amino-acid chain; its full sequence is Ferripyoverdine receptor (815 aa).

The signal sequence occupies residues 1 to 43; it reads MPAPHGLSPLSKAFLMRRAFQRRILPHSLAMALSLPLAGYVQA. The TBDR plug domain maps to 161–271; that stretch reads TPRETPQSIT…LGATINLIRK (111 aa). In terms of domain architecture, TBDR beta-barrel spans 276 to 815; sequence EFKGHVELGA…NLMFSTRWDF (540 aa). The TonB C-terminal box signature appears at 798–815; sequence SASYGDPRNLMFSTRWDF.

It belongs to the TonB-dependent receptor family.

The protein resides in the cell outer membrane. Receptor for the siderophore ferripyoverdine. In Pseudomonas aeruginosa (strain ATCC 15692 / DSM 22644 / CIP 104116 / JCM 14847 / LMG 12228 / 1C / PRS 101 / PAO1), this protein is Ferripyoverdine receptor (fpvA).